We begin with the raw amino-acid sequence, 262 residues long: Troponin T, slow skeletal muscle (262 aa).

Positions 1-31 are enriched in acidic residues; it reads MSDTEEQEYEEEQAEDEEAVEEEEAPEEPEP. 2 disordered regions span residues 1-62 and 109-153; these read MSDT…ERVD and ERAE…KKKV. At serine 2 the chain carries Phosphoserine; by CK2. Residues 32-41 show a composition bias toward basic and acidic residues; it reads VAEREEERPK. The span at 43-55 shows a compositional bias: pro residues; it reads SRPVVPPLIPPKI. The segment covering 109-149 has biased composition (basic and acidic residues); the sequence is ERAEQQRFRTEKERERQAKLAEEKMRKEEEEAKKRAEDDAK.

This sequence belongs to the troponin T family. In terms of assembly, interacts with TPM3. As to expression, expressed in adult soleus muscle.

Its function is as follows. Troponin T is the tropomyosin-binding subunit of troponin, the thin filament regulatory complex which confers calcium-sensitivity to striated muscle actomyosin ATPase activity. The polypeptide is Troponin T, slow skeletal muscle (Tnnt1) (Mus musculus (Mouse)).